The chain runs to 119 residues: uncharacterized protein (119 aa).

The ABC transmembrane type-1 domain occupies 1–112 (MVFNMRSTRG…FISSCLLLVL (112 aa)). The next 2 membrane-spanning stretches (helical) occupy residues 51 to 73 (VLAWSRAIGEFGATLMLAGATRF) and 91 to 111 (FEIAIGASLWLLFISSCLLLV).

It belongs to the binding-protein-dependent transport system permease family. CysTW subfamily.

It localises to the cell membrane. This is an uncharacterized protein from Haemophilus influenzae (strain ATCC 51907 / DSM 11121 / KW20 / Rd).